Here is a 57-residue protein sequence, read N- to C-terminus: uncharacterized protein (57 aa).

This is an uncharacterized protein from His1 virus (isolate Australia/Victoria) (His1V).